Here is a 387-residue protein sequence, read N- to C-terminus: Alpha-sarcoglycan (387 aa).

An N-terminal signal peptide occupies residues 1 to 23 (MAATLTWILLFVGLLAGLRDTKA). At 24-290 (QQTTLYPLVG…ATGRDFLADA (267 aa)) the chain is on the extracellular side. Asparagine 174 and asparagine 246 each carry an N-linked (GlcNAc...) asparagine glycan. Residues 291–311 (LVTLLVPLLVALLLTLLLAYI) traverse the membrane as a helical segment. Over 312 to 387 (MCCRREGQLK…AQVPLILDQH (76 aa)) the chain is Cytoplasmic. A Phosphoserine modification is found at serine 377.

Belongs to the sarcoglycan alpha/epsilon family. As to quaternary structure, interacts with the syntrophin SNTA1. Cross-link to form 2 major subcomplexes: one consisting of SGCB, SGCD and SGCG and the other consisting of SGCB and SGCD. The association between SGCB and SGCG is particularly strong while SGCA is loosely associated with the other sarcoglycans. In terms of tissue distribution, strongly expressed in skeletal and heart muscle.

It localises to the cell membrane. The protein resides in the sarcolemma. It is found in the cytoplasm. The protein localises to the cytoskeleton. Component of the sarcoglycan complex, a subcomplex of the dystrophin-glycoprotein complex which forms a link between the F-actin cytoskeleton and the extracellular matrix. This Mesocricetus auratus (Golden hamster) protein is Alpha-sarcoglycan (SGCA).